Consider the following 64-residue polypeptide: Large ribosomal subunit protein bL35 (64 aa).

It belongs to the bacterial ribosomal protein bL35 family.

The protein is Large ribosomal subunit protein bL35 of Acinetobacter baylyi (strain ATCC 33305 / BD413 / ADP1).